The primary structure comprises 815 residues: SNF1 protein kinase subunit beta-1 (815 aa).

Residues 1-11 (MGNSPSTQDPS) are compositionally biased toward polar residues. Disordered regions lie at residues 1–88 (MGNS…TIDK) and 117–148 (SDDHDVGAPEEQVKSPSFLSPGPSMATVKQTK). Residue Gly2 is the site of N-myristoyl glycine attachment. Positions 12–31 (HSTKKEHGHHFHDAFNKDRQ) are enriched in basic and acidic residues. A compositionally biased stretch (polar residues) spans 32–42 (GSITSQLFNNR). Ser33 is subject to Phosphoserine. Composition is skewed to basic and acidic residues over residues 72-88 (PSTDCDGRMSSDTTIDK) and 117-129 (SDDHDVGAPEEQV). Phosphoserine occurs at positions 181, 198, 200, 206, 209, and 220. 3 disordered regions span residues 310-335 (SHANNNGNIENNTRNKGNAGGSNDDF), 363-389 (HQNKTKKAQNKKIRSASNSRRSSFASL), and 410-444 (PLHPIINDNESQYSAPQHREISHHSNSMSSMSSIS). Residues 313 to 326 (NNNGNIENNTRNKG) are compositionally biased toward low complexity. At Ser331 the chain carries Phosphoserine. Basic residues predominate over residues 363–376 (HQNKTKKAQNKKIR). Low complexity-rich tracts occupy residues 377–389 (SASNSRRSSFASL) and 433–444 (HSNSMSSMSSIS). Residues 473 to 716 (VSTDIASALK…LQQGGNIDAE (244 aa)) form a kinase-interacting sequence (KIS); required for interaction with SNF1 region. Ser494 and Ser497 each carry phosphoserine. Residues 583–616 (TLDEELPKRPELKRFPSSSRKSSYYSAKGVERPS) are disordered. A compositionally biased stretch (basic and acidic residues) spans 587-596 (ELPKRPELKR). Residues 599–608 (SSSRKSSYYS) are compositionally biased toward low complexity. Ser643 bears the Phosphoserine mark. The interval 724 to 804 (SRYPVPDLPI…FITQVVYAPC (81 aa)) is association with SNF1 kinase complex (ASC) domain; required for interaction with SNF4.

This sequence belongs to the 5'-AMP-activated protein kinase beta subunit family. As to quaternary structure, component of the SNF1 kinase complex, a heterotrimeric complex composed of the catalytic alpha subunit SNF1, one of the three related beta subunits SIP1, SIP2 or GAL83, and the regulatory gamma subunit SNF4. The beta subunit serves as a bridge between the catalytic and the regulatory subunit. Interacts (via KIS domain) with SNF1. Interacts (via ASC domain) with SNF4. Phosphorylated by SNF1 in vitro.

It is found in the cytoplasm. Its subcellular location is the vacuole membrane. Its function is as follows. Beta subunit of the SNF1 kinase complex, which is required for transcriptional, metabolic, and developmental adaptations in response to glucose limitation. Has a structural role, mediating heterotrimer formation, and a regulatory role, defining carbon source-regulated subcellular location and substrate specificity of the SNF1 kinase complex. Promotes the PKA-regulated relocalization of the SNF1 kinase complex to the vacuolar membrane in response to various types of carbon stress. This is SNF1 protein kinase subunit beta-1 (SIP1) from Saccharomyces cerevisiae (strain YJM789) (Baker's yeast).